We begin with the raw amino-acid sequence, 329 residues long: Endonuclease 8-like 2 (329 aa).

Residue proline 2 is the Schiff-base intermediate with DNA of the active site. Catalysis depends on glutamate 3, which acts as the Proton donor. Lysine 50 acts as the Proton donor; for beta-elimination activity in catalysis. Position 50 is an N6-acetyllysine (lysine 50). Phosphoserine is present on serine 68. Positions 88–112 (GPSAQEPSAGPSGSGEPVPSRSAET) are disordered. Lysine 150 is modified (N6-acetyllysine). Residue asparagine 227 coordinates DNA. The FPG-type zinc finger occupies 280 to 316 (QIYQKEQCPSGHQVMKETFGPPDGLQRLTWWCPQCQP). The active-site Proton donor; for delta-elimination activity is the arginine 306.

Belongs to the FPG family. Binds EP300.

Its subcellular location is the nucleus. The catalysed reaction is 2'-deoxyribonucleotide-(2'-deoxyribose 5'-phosphate)-2'-deoxyribonucleotide-DNA = a 3'-end 2'-deoxyribonucleotide-(2,3-dehydro-2,3-deoxyribose 5'-phosphate)-DNA + a 5'-end 5'-phospho-2'-deoxyribonucleoside-DNA + H(+). Its activity is regulated as follows. Acetylation of Lys-50 leads to loss of DNA nicking activity. In terms of biological role, involved in base excision repair of DNA damaged by oxidation or by mutagenic agents. Has DNA glycosylase activity towards 5-hydroxyuracil and other oxidized derivatives of cytosine with a preference for mismatched double-stranded DNA (DNA bubbles). Has low or no DNA glycosylase activity towards thymine glycol, 2-hydroxyadenine, hypoxanthine and 8-oxoguanine. Has AP (apurinic/apyrimidinic) lyase activity and introduces nicks in the DNA strand. Cleaves the DNA backbone by beta-delta elimination to generate a single-strand break at the site of the removed base with both 3'- and 5'-phosphates. This is Endonuclease 8-like 2 (Neil2) from Mus musculus (Mouse).